The following is a 302-amino-acid chain: MEPGPDGPAASGPAAIREGWFRETCSLWPGQALSLQVEQLLHHRRSRYQDILVFRSKTYGNVLVLDGVIQCTERDEFSYQEMIANLPLCSHPNPRKVLIIGGGDGGVLREVVKHPSVESVVQCEIDEDVIQVSKKFLPGMAIGYSSSKLTLHVGDGFEFMKQNQDAFDVIITDSSDPMGPAESLFKESYYQLMKTALKEDGVLCCQGECQWLHLDLIKEMRQFCQSLFPVVAYAYCTIPTYPSGQIGFMLCSKNPSTNFQEPVQPLTQQQVAQMQLKYYNSDVHRAAFVLPEFARKALNDVS.

Position 1 is an N-acetylmethionine (Met1). A PABS domain is found at 18-253; the sequence is EGWFRETCSL…GQIGFMLCSK (236 aa). Residue Gln49 participates in S-adenosyl 3-(methylsulfanyl)propylamine binding. Residue Tyr79 participates in putrescine binding. S-adenosyl 3-(methylsulfanyl)propylamine-binding positions include Gln80, Asp104, Glu124, 155–156, and Asp173; that span reads DG. Residue Asp173 is the Proton acceptor of the active site. Putrescine-binding positions include 173–176 and Tyr241; that span reads DSSD.

It belongs to the spermidine/spermine synthase family. Homodimer or homotetramer.

The enzyme catalyses S-adenosyl 3-(methylsulfanyl)propylamine + putrescine = S-methyl-5'-thioadenosine + spermidine + H(+). The protein operates within amine and polyamine biosynthesis; spermidine biosynthesis; spermidine from putrescine: step 1/1. The activity is thought to be regulated mainly by the availability of decarboxylated S-adenosylmethionine. Catalyzes the production of spermidine from putrescine and decarboxylated S-adenosylmethionine (dcSAM). Has a strong preference for putrescine as substrate, and has very low activity towards 1,3-diaminopropane. Has extremely low activity towards spermidine. This chain is Spermidine synthase (SRM), found in Homo sapiens (Human).